A 510-amino-acid polypeptide reads, in one-letter code: Maturase K (510 aa).

Belongs to the intron maturase 2 family. MatK subfamily.

The protein resides in the plastid. It is found in the chloroplast. In terms of biological role, usually encoded in the trnK tRNA gene intron. Probably assists in splicing its own and other chloroplast group II introns. This is Maturase K from Populus nigra (Lombardy poplar).